We begin with the raw amino-acid sequence, 205 residues long: Syndecan 4-B (205 aa).

A signal peptide spans 1–17; it reads MNRLLLLLALVLSGVAA. Residues 18 to 162 are Extracellular-facing; it reads ESIRETETMD…FFQRTEVIVA (145 aa). Positions 26–113 are disordered; the sequence is MDPTSMLEYE…HDFDETKTGR (88 aa). O-linked (Xyl...) (glycosaminoglycan) serine glycosylation is found at Ser37, Ser73, and Ser75. Positions 44–94 are enriched in acidic residues; sequence VFVDEDDDDDYEDGVDYEIDSESDNDEDYSGSGDDDFDDEDNVEDEDEEET. A compositionally biased stretch (basic and acidic residues) spans 102–113; the sequence is PEHDFDETKTGR. Residues 163–183 form a helical membrane-spanning segment; that stretch reads IIAGTLVGLVVAVSFIVFLVI. The Cytoplasmic segment spans residues 184–205; that stretch reads RRNQNGDLVKKPIYKKTSTMEV.

This sequence belongs to the syndecan proteoglycan family. As to quaternary structure, interacts with the Wnt receptor fzd7 and its signal transducer dvl2/dsh. O-glycosylated; contains both chondroitin sulfate and heparan sulfate. Ser-37, Ser-73 and Ser-75 can all be modified by either chondroitin sulfate or heparan sulfate, and the protein exists in forms that contain only chondroitin sulfate, only heparan sulfate and both chondroitin sulfate and heparan sulfate. As to expression, expressed in the animal hemisphere from the 4-cell to the blastula stage. During gastrulation, expressed in the involuting dorsal mesoderm and ectoderm. After involution, localized mainly to the anterior neuroectoderm. At later stages, expressed in the brain, branchial arches, pronephros, tailbud, and at low levels in the somites.

Its subcellular location is the membrane. Its function is as follows. Cell surface proteoglycan. Regulates non-canonical Wnt signaling, being necessary and sufficient for fibronectrin-mediated translocation of dvl2/dsh to the plasma membrane. Required for proper convergent extension movements during gastrulation, which shape the neural plate, and for subsequent neural tube closure. The chain is Syndecan 4-B (sdc4-b) from Xenopus laevis (African clawed frog).